The sequence spans 334 residues: 7,8-didemethyl-8-hydroxy-5-deazariboflavin synthase (334 aa).

The 247-residue stretch at 2–248 folds into the Radical SAM core domain; sequence VSYSKNVFVP…PDVPVQVPPN (247 aa). 3 residues coordinate [4Fe-4S] cluster: Cys16, Cys20, and Cys23.

This sequence belongs to the radical SAM superfamily. CofG family. As to quaternary structure, consists of two subunits, CofG and CofH. Requires [4Fe-4S] cluster as cofactor.

It carries out the reaction 5-amino-5-(4-hydroxybenzyl)-6-(D-ribitylimino)-5,6-dihydrouracil + S-adenosyl-L-methionine = 7,8-didemethyl-8-hydroxy-5-deazariboflavin + 5'-deoxyadenosine + L-methionine + NH4(+) + H(+). It functions in the pathway cofactor biosynthesis; coenzyme F0 biosynthesis. Functionally, catalyzes the radical-mediated synthesis of 7,8-didemethyl-8-hydroxy-5-deazariboflavin from 5-amino-5-(4-hydroxybenzyl)-6-(D-ribitylimino)-5,6-dihydrouracil. The chain is 7,8-didemethyl-8-hydroxy-5-deazariboflavin synthase from Methanopyrus kandleri (strain AV19 / DSM 6324 / JCM 9639 / NBRC 100938).